Consider the following 159-residue polypeptide: Ribosomal RNA large subunit methyltransferase H (159 aa).

S-adenosyl-L-methionine-binding positions include leucine 76, glycine 108, and 127–132 (FSKMTF).

This sequence belongs to the RNA methyltransferase RlmH family. As to quaternary structure, homodimer.

It is found in the cytoplasm. It catalyses the reaction pseudouridine(1915) in 23S rRNA + S-adenosyl-L-methionine = N(3)-methylpseudouridine(1915) in 23S rRNA + S-adenosyl-L-homocysteine + H(+). Its function is as follows. Specifically methylates the pseudouridine at position 1915 (m3Psi1915) in 23S rRNA. This Staphylococcus carnosus (strain TM300) protein is Ribosomal RNA large subunit methyltransferase H.